The primary structure comprises 138 residues: Large ribosomal subunit protein uL16 (138 aa).

It belongs to the universal ribosomal protein uL16 family. In terms of assembly, part of the 50S ribosomal subunit.

In terms of biological role, binds 23S rRNA and is also seen to make contacts with the A and possibly P site tRNAs. The chain is Large ribosomal subunit protein uL16 from Chlamydia pneumoniae (Chlamydophila pneumoniae).